A 1901-amino-acid polypeptide reads, in one-letter code: Protein TIC 214 (1901 aa).

A run of 6 helical transmembrane segments spans residues 18–38, 64–84, 87–107, 124–144, 172–192, and 221–241; these read IINS…FSIG, FITG…HLAL, PHTI…WNNH, LSIQ…HFIL, VGWL…LVWI, and IFSI…PSPI. Disordered regions lie at residues 248–299, 797–817, and 1591–1618; these read EASK…EERW, REEQ…ENKR, and IQEA…LGPV. The segment covering 256 to 268 has biased composition (acidic residues); that stretch reads VESEEERDVEIET. Residues 1591–1611 are compositionally biased toward basic and acidic residues; the sequence is IQEAKEPASQGEKERGSDIEN.

The protein belongs to the TIC214 family. In terms of assembly, part of the Tic complex.

The protein localises to the plastid. It is found in the chloroplast inner membrane. Its function is as follows. Involved in protein precursor import into chloroplasts. May be part of an intermediate translocation complex acting as a protein-conducting channel at the inner envelope. The polypeptide is Protein TIC 214 (Nicotiana sylvestris (Wood tobacco)).